The chain runs to 150 residues: Endoribonuclease YbeY (150 aa).

His-112, His-116, and His-122 together coordinate Zn(2+).

The protein belongs to the endoribonuclease YbeY family. Requires Zn(2+) as cofactor.

The protein localises to the cytoplasm. Single strand-specific metallo-endoribonuclease involved in late-stage 70S ribosome quality control and in maturation of the 3' terminus of the 16S rRNA. This is Endoribonuclease YbeY from Geobacter sulfurreducens (strain ATCC 51573 / DSM 12127 / PCA).